Here is a 524-residue protein sequence, read N- to C-terminus: Casein kinase I homolog 3 (524 aa).

The Protein kinase domain maps to Y14–L319. ATP is bound by residues I20–I28 and K60. D150 acts as the Proton acceptor in catalysis. Disordered regions lie at residues H352–H414 and P427–L474. A compositionally biased stretch (low complexity) spans R360–N373. 2 stretches are compositionally biased toward polar residues: residues S374 to Q413 and T429 to L474. The short motif at Y444–I447 is the YXXZ targeting signal element. 7 S-palmitoyl cysteine lipidation sites follow: C517, C518, C519, C520, C522, C523, and C524.

Belongs to the protein kinase superfamily. CK1 Ser/Thr protein kinase family. Casein kinase I subfamily.

The protein localises to the cell membrane. It is found in the nucleus membrane. Its subcellular location is the vacuole membrane. The catalysed reaction is L-seryl-[protein] + ATP = O-phospho-L-seryl-[protein] + ADP + H(+). It catalyses the reaction L-threonyl-[protein] + ATP = O-phospho-L-threonyl-[protein] + ADP + H(+). Casein kinases are operationally defined by their preferential utilization of acidic proteins such as caseins as substrates. Phosphorylates MON1, inhibiting the guanine nucleotide exchange factor activity of the MON1-CCZ1 complex, possibly by preventing its recruitment to membranes by small GTPase RAB5 homologs. This chain is Casein kinase I homolog 3 (YCK3), found in Saccharomyces cerevisiae (strain ATCC 204508 / S288c) (Baker's yeast).